Here is an 874-residue protein sequence, read N- to C-terminus: Alanine--tRNA ligase (874 aa).

Zn(2+)-binding residues include H564, H568, C665, and H669.

The protein belongs to the class-II aminoacyl-tRNA synthetase family. The cofactor is Zn(2+).

It localises to the cytoplasm. The enzyme catalyses tRNA(Ala) + L-alanine + ATP = L-alanyl-tRNA(Ala) + AMP + diphosphate. Its function is as follows. Catalyzes the attachment of alanine to tRNA(Ala) in a two-step reaction: alanine is first activated by ATP to form Ala-AMP and then transferred to the acceptor end of tRNA(Ala). Also edits incorrectly charged Ser-tRNA(Ala) and Gly-tRNA(Ala) via its editing domain. In Paraburkholderia phymatum (strain DSM 17167 / CIP 108236 / LMG 21445 / STM815) (Burkholderia phymatum), this protein is Alanine--tRNA ligase.